A 473-amino-acid polypeptide reads, in one-letter code: Photosystem II CP43 reaction center protein (473 aa).

Positions 1–14 are excised as a propeptide; it reads MKTLYSLRRFYPVE. The residue at position 15 (Thr15) is an N-acetylthreonine. A Phosphothreonine modification is found at Thr15. 5 consecutive transmembrane segments (helical) span residues 69–93, 134–155, 178–200, 255–275, and 291–312; these read LFEV…PHLA, LLGP…KDRN, KALY…RKIT, KPFA…LSYS, and WFNN…ASQA. Residue Glu367 participates in [CaMn4O5] cluster binding. Residues 447 to 471 traverse the membrane as a helical segment; it reads RARAAAAGFEKGIDRDFEPVLSMTP.

This sequence belongs to the PsbB/PsbC family. PsbC subfamily. In terms of assembly, PSII is composed of 1 copy each of membrane proteins PsbA, PsbB, PsbC, PsbD, PsbE, PsbF, PsbH, PsbI, PsbJ, PsbK, PsbL, PsbM, PsbT, PsbX, PsbY, PsbZ, Psb30/Ycf12, at least 3 peripheral proteins of the oxygen-evolving complex and a large number of cofactors. It forms dimeric complexes. Requires Binds multiple chlorophylls and provides some of the ligands for the Ca-4Mn-5O cluster of the oxygen-evolving complex. It may also provide a ligand for a Cl- that is required for oxygen evolution. PSII binds additional chlorophylls, carotenoids and specific lipids. as cofactor.

It is found in the plastid. The protein localises to the chloroplast thylakoid membrane. One of the components of the core complex of photosystem II (PSII). It binds chlorophyll and helps catalyze the primary light-induced photochemical processes of PSII. PSII is a light-driven water:plastoquinone oxidoreductase, using light energy to abstract electrons from H(2)O, generating O(2) and a proton gradient subsequently used for ATP formation. The protein is Photosystem II CP43 reaction center protein of Calycanthus floridus var. glaucus (Eastern sweetshrub).